The primary structure comprises 371 residues: 2-oxoadipate dioxygenase/decarboxylase, chloroplastic (371 aa).

Residues 1–50 (MISLHSSAIKASLYGSFPSSLRSTLSVSFSAGSLIRLPSVGKRNLSVVVS) constitute a chloroplast transit peptide. Residues His-113 and Arg-117 each coordinate 2-oxoadipate. His-113 is a Fe(2+) binding site. His-250 serves as a coordination point for Fe(2+). Residues Gln-296 and Tyr-320 each coordinate 2-oxoadipate. Position 322 (Glu-322) interacts with Fe(2+).

It belongs to the 2-oxoadipate dioxygenase/decarboxylase family. The cofactor is Fe(2+).

It localises to the plastid. It is found in the chloroplast. The catalysed reaction is 2-oxoadipate + O2 = (R)-2-hydroxyglutarate + CO2. Its pathway is amino-acid degradation. Functionally, catalyzes the decarboxylation and hydroxylation of 2-oxoadipate (2OA) to form D-2-hydroxyglutarate (D-2-HGA). Is involved in a D-lysine catabolic pathway. This Arabidopsis thaliana (Mouse-ear cress) protein is 2-oxoadipate dioxygenase/decarboxylase, chloroplastic.